We begin with the raw amino-acid sequence, 216 residues long: U1 small nuclear ribonucleoprotein C (216 aa).

The segment at Phe-4–Glu-36 adopts a Matrin-type zinc-finger fold. 3 stretches are compositionally biased toward pro residues: residues Ala-68–Gly-80, Gln-87–Pro-198, and Pro-206–Arg-216. Positions Ala-68–Arg-216 are disordered.

Belongs to the U1 small nuclear ribonucleoprotein C family. As to quaternary structure, U1 snRNP is composed of the 7 core Sm proteins B/B', D1, D2, D3, E, F and G that assemble in a heptameric protein ring on the Sm site of the small nuclear RNA to form the core snRNP, and at least 3 U1 snRNP-specific proteins U1-70K, U1-A and U1-C. U1-C interacts with U1 snRNA and the 5' splice-site region of the pre-mRNA.

The protein localises to the nucleus. Its function is as follows. Component of the spliceosomal U1 snRNP, which is essential for recognition of the pre-mRNA 5' splice-site and the subsequent assembly of the spliceosome. U1-C is directly involved in initial 5' splice-site recognition for both constitutive and regulated alternative splicing. The interaction with the 5' splice-site seems to precede base-pairing between the pre-mRNA and the U1 snRNA. Stimulates commitment or early (E) complex formation by stabilizing the base pairing of the 5' end of the U1 snRNA and the 5' splice-site region. In Aspergillus fumigatus (strain ATCC MYA-4609 / CBS 101355 / FGSC A1100 / Af293) (Neosartorya fumigata), this protein is U1 small nuclear ribonucleoprotein C.